We begin with the raw amino-acid sequence, 207 residues long: Guanylate kinase (207 aa).

Residues Gly6–Glu185 form the Guanylate kinase-like domain. Residue Gly13 to Gly20 coordinates ATP.

The protein belongs to the guanylate kinase family.

It is found in the cytoplasm. It catalyses the reaction GMP + ATP = GDP + ADP. In terms of biological role, essential for recycling GMP and indirectly, cGMP. The sequence is that of Guanylate kinase from Staphylococcus epidermidis (strain ATCC 12228 / FDA PCI 1200).